A 321-amino-acid chain; its full sequence is Lipoyl synthase (321 aa).

7 residues coordinate [4Fe-4S] cluster: Cys-68, Cys-73, Cys-79, Cys-94, Cys-98, Cys-101, and Ser-308. The Radical SAM core domain maps to 80–297 (FNHGTATFMI…KVIALELGFT (218 aa)).

Belongs to the radical SAM superfamily. Lipoyl synthase family. The cofactor is [4Fe-4S] cluster.

It is found in the cytoplasm. It carries out the reaction [[Fe-S] cluster scaffold protein carrying a second [4Fe-4S](2+) cluster] + N(6)-octanoyl-L-lysyl-[protein] + 2 oxidized [2Fe-2S]-[ferredoxin] + 2 S-adenosyl-L-methionine + 4 H(+) = [[Fe-S] cluster scaffold protein] + N(6)-[(R)-dihydrolipoyl]-L-lysyl-[protein] + 4 Fe(3+) + 2 hydrogen sulfide + 2 5'-deoxyadenosine + 2 L-methionine + 2 reduced [2Fe-2S]-[ferredoxin]. The protein operates within protein modification; protein lipoylation via endogenous pathway; protein N(6)-(lipoyl)lysine from octanoyl-[acyl-carrier-protein]: step 2/2. Catalyzes the radical-mediated insertion of two sulfur atoms into the C-6 and C-8 positions of the octanoyl moiety bound to the lipoyl domains of lipoate-dependent enzymes, thereby converting the octanoylated domains into lipoylated derivatives. In Aliivibrio salmonicida (strain LFI1238) (Vibrio salmonicida (strain LFI1238)), this protein is Lipoyl synthase.